Here is a 194-residue protein sequence, read N- to C-terminus: dITP/XTP pyrophosphatase (194 aa).

8–13 lines the substrate pocket; the sequence is TGNPGK. 2 residues coordinate Mg(2+): Glu-38 and Asp-67. Residue Asp-67 is the Proton acceptor of the active site. Substrate is bound by residues Ser-68, 146-149, Lys-169, and 174-175; these read FGYD and HR.

It belongs to the HAM1 NTPase family. As to quaternary structure, homodimer. Mg(2+) serves as cofactor.

The catalysed reaction is XTP + H2O = XMP + diphosphate + H(+). The enzyme catalyses dITP + H2O = dIMP + diphosphate + H(+). It catalyses the reaction ITP + H2O = IMP + diphosphate + H(+). Functionally, pyrophosphatase that catalyzes the hydrolysis of nucleoside triphosphates to their monophosphate derivatives, with a high preference for the non-canonical purine nucleotides XTP (xanthosine triphosphate), dITP (deoxyinosine triphosphate) and ITP. Seems to function as a house-cleaning enzyme that removes non-canonical purine nucleotides from the nucleotide pool, thus preventing their incorporation into DNA/RNA and avoiding chromosomal lesions. This chain is dITP/XTP pyrophosphatase, found in Synechocystis sp. (strain ATCC 27184 / PCC 6803 / Kazusa).